Consider the following 157-residue polypeptide: MIRIGQGYDVHKLAYDRELIVGGIKIPYEKGLLGHSDADVLLHAITDAIIGAIGAGDIGHFFPDTDMAFKDADSAELLEEIWQKVEADGFRLGNLDATIIAEKPKMAPYVEQMKLRIAELLHADSAQVNVKATTTEKLGFTGREEGIASLAVVLLEK.

D9 and H11 together coordinate a divalent metal cation. Residues 9 to 11 and 35 to 36 contribute to the 4-CDP-2-C-methyl-D-erythritol 2-phosphate site; these read DVH and HS. H43 serves as a coordination point for a divalent metal cation. 4-CDP-2-C-methyl-D-erythritol 2-phosphate is bound by residues 57–59, 62–66, 101–107, 133–136, F140, and R143; these read DIG, FPDTD, AEKPKMA, and TTTE.

Belongs to the IspF family. As to quaternary structure, homotrimer. A divalent metal cation serves as cofactor.

The enzyme catalyses 4-CDP-2-C-methyl-D-erythritol 2-phosphate = 2-C-methyl-D-erythritol 2,4-cyclic diphosphate + CMP. It functions in the pathway isoprenoid biosynthesis; isopentenyl diphosphate biosynthesis via DXP pathway; isopentenyl diphosphate from 1-deoxy-D-xylulose 5-phosphate: step 4/6. Functionally, involved in the biosynthesis of isopentenyl diphosphate (IPP) and dimethylallyl diphosphate (DMAPP), two major building blocks of isoprenoid compounds. Catalyzes the conversion of 4-diphosphocytidyl-2-C-methyl-D-erythritol 2-phosphate (CDP-ME2P) to 2-C-methyl-D-erythritol 2,4-cyclodiphosphate (ME-CPP) with a corresponding release of cytidine 5-monophosphate (CMP). The polypeptide is 2-C-methyl-D-erythritol 2,4-cyclodiphosphate synthase (Listeria monocytogenes serotype 4b (strain F2365)).